The sequence spans 175 residues: Large ribosomal subunit protein uL6 (175 aa).

Belongs to the universal ribosomal protein uL6 family. In terms of assembly, part of the 50S ribosomal subunit.

Its function is as follows. This protein binds to the 23S rRNA, and is important in its secondary structure. It is located near the subunit interface in the base of the L7/L12 stalk, and near the tRNA binding site of the peptidyltransferase center. In Xanthomonas campestris pv. campestris (strain 8004), this protein is Large ribosomal subunit protein uL6.